Here is an 86-residue protein sequence, read N- to C-terminus: Photosystem I reaction center subunit PsaK (86 aa).

A run of 2 helical transmembrane segments spans residues 15–35 and 57–77; these read SWSI…IGLG and GLPE…GAII.

Belongs to the PsaG/PsaK family.

The protein localises to the plastid. The protein resides in the chloroplast thylakoid membrane. The chain is Photosystem I reaction center subunit PsaK from Gracilaria tenuistipitata var. liui (Red alga).